The sequence spans 227 residues: Cytochrome c oxidase subunit 2 (227 aa).

Topologically, residues 1 to 14 are mitochondrial intermembrane; the sequence is MAYPFELGFQDATS. The chain crosses the membrane as a helical span at residues 15 to 45; that stretch reads PIMEELLHFHDHTLMIVFLISSLVLYIISLM. Topologically, residues 46 to 59 are mitochondrial matrix; the sequence is LTTKLTHTSTMDAQ. Residues 60–87 form a helical membrane-spanning segment; that stretch reads EVETIWTILPAIILILIALPSLRILYMM. At 88 to 227 the chain is on the mitochondrial intermembrane side; the sequence is DEINDPSLTV…HFENWSSSML (140 aa). Cu cation is bound by residues His-161, Cys-196, Glu-198, Cys-200, His-204, and Met-207. Glu-198 contributes to the Mg(2+) binding site.

The protein belongs to the cytochrome c oxidase subunit 2 family. Component of the cytochrome c oxidase (complex IV, CIV), a multisubunit enzyme composed of 14 subunits. The complex is composed of a catalytic core of 3 subunits MT-CO1, MT-CO2 and MT-CO3, encoded in the mitochondrial DNA, and 11 supernumerary subunits COX4I, COX5A, COX5B, COX6A, COX6B, COX6C, COX7A, COX7B, COX7C, COX8 and NDUFA4, which are encoded in the nuclear genome. The complex exists as a monomer or a dimer and forms supercomplexes (SCs) in the inner mitochondrial membrane with NADH-ubiquinone oxidoreductase (complex I, CI) and ubiquinol-cytochrome c oxidoreductase (cytochrome b-c1 complex, complex III, CIII), resulting in different assemblies (supercomplex SCI(1)III(2)IV(1) and megacomplex MCI(2)III(2)IV(2)). Found in a complex with TMEM177, COA6, COX18, COX20, SCO1 and SCO2. Interacts with TMEM177 in a COX20-dependent manner. Interacts with COX20. Interacts with COX16. Cu cation is required as a cofactor.

It is found in the mitochondrion inner membrane. It carries out the reaction 4 Fe(II)-[cytochrome c] + O2 + 8 H(+)(in) = 4 Fe(III)-[cytochrome c] + 2 H2O + 4 H(+)(out). In terms of biological role, component of the cytochrome c oxidase, the last enzyme in the mitochondrial electron transport chain which drives oxidative phosphorylation. The respiratory chain contains 3 multisubunit complexes succinate dehydrogenase (complex II, CII), ubiquinol-cytochrome c oxidoreductase (cytochrome b-c1 complex, complex III, CIII) and cytochrome c oxidase (complex IV, CIV), that cooperate to transfer electrons derived from NADH and succinate to molecular oxygen, creating an electrochemical gradient over the inner membrane that drives transmembrane transport and the ATP synthase. Cytochrome c oxidase is the component of the respiratory chain that catalyzes the reduction of oxygen to water. Electrons originating from reduced cytochrome c in the intermembrane space (IMS) are transferred via the dinuclear copper A center (CU(A)) of subunit 2 and heme A of subunit 1 to the active site in subunit 1, a binuclear center (BNC) formed by heme A3 and copper B (CU(B)). The BNC reduces molecular oxygen to 2 water molecules using 4 electrons from cytochrome c in the IMS and 4 protons from the mitochondrial matrix. The chain is Cytochrome c oxidase subunit 2 (MT-CO2) from Tamias merriami (Merriam's chipmunk).